The following is a 440-amino-acid chain: Probable exopolygalacturonase B (440 aa).

A signal peptide spans 1-20; it reads MRLHFLPLVALCATTASSLA. N-linked (GlcNAc...) asparagine glycans are attached at residues N65, N190, and N230. The Proton donor role is filled by D260. An intrachain disulfide couples C262 to C279. 2 N-linked (GlcNAc...) asparagine glycosylation sites follow: N268 and N280. The active site involves H283. Residues N307, N334, and N371 are each glycosylated (N-linked (GlcNAc...) asparagine). A disulfide bond links C397 and C403. N-linked (GlcNAc...) asparagine glycosylation occurs at N412.

Belongs to the glycosyl hydrolase 28 family.

Its subcellular location is the secreted. It catalyses the reaction [(1-&gt;4)-alpha-D-galacturonosyl](n) + H2O = alpha-D-galacturonate + [(1-&gt;4)-alpha-D-galacturonosyl](n-1). In terms of biological role, specific in hydrolyzing the terminal glycosidic bond of polygalacturonic acid and oligogalacturonates. The chain is Probable exopolygalacturonase B (pgxB) from Emericella nidulans (strain FGSC A4 / ATCC 38163 / CBS 112.46 / NRRL 194 / M139) (Aspergillus nidulans).